The chain runs to 823 residues: Putative ankyrin repeat domain-containing protein 20A4 (823 aa).

5 ANK repeats span residues 66 to 95 (QHRT…QIDV), 99 to 128 (ENRT…NPNL), 132 to 161 (YGNT…HIEA), 165 to 194 (DNNT…SSHA), and 198 to 227 (LRRS…DVFA). Disordered stretches follow at residues 301-343 (VPEK…EVED) and 356-405 (QTLR…NICD). The span at 371–384 (EQQRHERSEKKQPQ) shows a compositional bias: basic and acidic residues. Coiled-coil stretches lie at residues 431–480 (KKLK…KQLE), 565–724 (EMIT…NNST), and 776–806 (FVLE…KTEV).

The chain is Putative ankyrin repeat domain-containing protein 20A4 from Homo sapiens (Human).